A 321-amino-acid polypeptide reads, in one-letter code: Arabinan endo-1,5-alpha-L-arabinosidase A (321 aa).

The signal sequence occupies residues 1–19 (MYQLLSVASVPLLASLVHG). The active-site Proton acceptor is the Asp34. The Proton donor role is filled by Glu200. An N-linked (GlcNAc...) asparagine glycan is attached at Asn295.

Belongs to the glycosyl hydrolase 43 family.

It carries out the reaction Endohydrolysis of (1-&gt;5)-alpha-arabinofuranosidic linkages in (1-&gt;5)-arabinans.. The protein operates within glycan metabolism; L-arabinan degradation. In terms of biological role, its preferred substrate is linear 1,5-alpha-L-arabinan. The enzyme activity is progressively reduced as 1,5-alpha-chains become shorter or more highly substituted. The polypeptide is Arabinan endo-1,5-alpha-L-arabinosidase A (abnA) (Aspergillus niger).